A 73-amino-acid polypeptide reads, in one-letter code: Small ribosomal subunit protein bS18 (73 aa).

It belongs to the bacterial ribosomal protein bS18 family. As to quaternary structure, part of the 30S ribosomal subunit. Forms a tight heterodimer with protein bS6.

Its function is as follows. Binds as a heterodimer with protein bS6 to the central domain of the 16S rRNA, where it helps stabilize the platform of the 30S subunit. In Prochlorococcus marinus (strain MIT 9313), this protein is Small ribosomal subunit protein bS18.